A 438-amino-acid chain; its full sequence is Plasmalemma vesicle-associated protein (438 aa).

The Cytoplasmic segment spans residues 1 to 26 (MGLSMDRSPYARTGDQQRGCWYYLRY). The helical; Signal-anchor for type II membrane protein transmembrane segment at 27–47 (FFLFVSLIQFLIILGLVLFMI) threads the bilayer. At 48–438 (YGNVHATTES…VVNPAAQPSG (391 aa)) the chain is on the extracellular side. N-linked (GlcNAc...) asparagine glycosylation is found at asparagine 82, asparagine 88, asparagine 112, and asparagine 150. Coiled coils occupy residues 140-160 (KQCQ…LFKL), 189-224 (KRQT…QSLC), and 281-383 (EELA…ISAL). Positions 391–413 (SLPAVPPRVSGPPPNPPPIDPAS) are disordered. The segment covering 394 to 410 (AVPPRVSGPPPNPPPID) has biased composition (pro residues).

Homodimer. Expressed in lung, kidney, spleen, heart, muscle, eye, pancreas, thyroid, thymus, submaxillary gland, prostate, epididymis, uterus and liver.

The protein resides in the cell membrane. It localises to the membrane. It is found in the caveola. Its subcellular location is the cytoplasm. The protein localises to the perinuclear region. Functionally, endothelial cell-specific membrane protein involved in the formation of the diaphragms that bridge endothelial fenestrae. It is also required for the formation of stomata of caveolae and transendothelial channels. Functions in microvascular permeability, endothelial fenestrae contributing to the passage of water and solutes and regulating transcellular versus paracellular flow in different organs. Plays a specific role in embryonic development. The chain is Plasmalemma vesicle-associated protein (Plvap) from Mus musculus (Mouse).